Consider the following 232-residue polypeptide: tRNA1(Val) (adenine(37)-N6)-methyltransferase (232 aa).

Belongs to the methyltransferase superfamily. tRNA (adenine-N(6)-)-methyltransferase family.

It is found in the cytoplasm. It catalyses the reaction adenosine(37) in tRNA1(Val) + S-adenosyl-L-methionine = N(6)-methyladenosine(37) in tRNA1(Val) + S-adenosyl-L-homocysteine + H(+). Specifically methylates the adenine in position 37 of tRNA(1)(Val) (anticodon cmo5UAC). The sequence is that of tRNA1(Val) (adenine(37)-N6)-methyltransferase from Pseudoalteromonas translucida (strain TAC 125).